The chain runs to 298 residues: Ribosomal RNA small subunit methyltransferase H (298 aa).

Residues 35-37, Asp55, Phe82, Asp100, and Gln107 contribute to the S-adenosyl-L-methionine site; that span reads GGH.

The protein belongs to the methyltransferase superfamily. RsmH family.

The protein resides in the cytoplasm. The enzyme catalyses cytidine(1402) in 16S rRNA + S-adenosyl-L-methionine = N(4)-methylcytidine(1402) in 16S rRNA + S-adenosyl-L-homocysteine + H(+). Functionally, specifically methylates the N4 position of cytidine in position 1402 (C1402) of 16S rRNA. This Chlamydia abortus (strain DSM 27085 / S26/3) (Chlamydophila abortus) protein is Ribosomal RNA small subunit methyltransferase H.